A 229-amino-acid polypeptide reads, in one-letter code: ATP synthase subunit a (229 aa).

Transmembrane regions (helical) follow at residues 14–34 (LIAI…ALIL), 68–88 (YFPF…LGLF), 98–118 (IVVT…GGLW), 124–144 (FLSI…LVLI), 157–179 (GVRL…GFGF), and 189–209 (NIFP…VAVI).

Belongs to the ATPase A chain family. As to quaternary structure, F-type ATPases have 2 components, CF(1) - the catalytic core - and CF(0) - the membrane proton channel. CF(1) has five subunits: alpha(3), beta(3), gamma(1), delta(1), epsilon(1). CF(0) has three main subunits: a, b and c.

It localises to the mitochondrion inner membrane. Mitochondrial membrane ATP synthase (F(1)F(0) ATP synthase or Complex V) produces ATP from ADP in the presence of a proton gradient across the membrane which is generated by electron transport complexes of the respiratory chain. F-type ATPases consist of two structural domains, F(1) - containing the extramembraneous catalytic core and F(0) - containing the membrane proton channel, linked together by a central stalk and a peripheral stalk. During catalysis, ATP synthesis in the catalytic domain of F(1) is coupled via a rotary mechanism of the central stalk subunits to proton translocation. Key component of the proton channel; it may play a direct role in the translocation of protons across the membrane. In Metridium senile (Brown sea anemone), this protein is ATP synthase subunit a (ATPASE6).